Here is a 1291-residue protein sequence, read N- to C-terminus: DNA-directed RNA polymerase subunit beta (1291 aa).

The protein belongs to the RNA polymerase beta chain family. In terms of assembly, the RNAP catalytic core consists of 2 alpha, 1 beta, 1 beta' and 1 omega subunit. When a sigma factor is associated with the core the holoenzyme is formed, which can initiate transcription.

The enzyme catalyses RNA(n) + a ribonucleoside 5'-triphosphate = RNA(n+1) + diphosphate. Functionally, DNA-dependent RNA polymerase catalyzes the transcription of DNA into RNA using the four ribonucleoside triphosphates as substrates. The sequence is that of DNA-directed RNA polymerase subunit beta from Cytophaga hutchinsonii (strain ATCC 33406 / DSM 1761 / CIP 103989 / NBRC 15051 / NCIMB 9469 / D465).